A 181-amino-acid chain; its full sequence is Nucleoside triphosphate/diphosphate phosphatase (181 aa).

Catalysis depends on R26, which acts as the Proton donor. Positions 90, 106, 108, 110, 123, and 126 each coordinate Mg(2+).

This sequence belongs to the Ntdp family. Requires Mg(2+) as cofactor.

The catalysed reaction is a ribonucleoside 5'-triphosphate + H2O = a ribonucleoside 5'-diphosphate + phosphate + H(+). It catalyses the reaction a ribonucleoside 5'-diphosphate + H2O = a ribonucleoside 5'-phosphate + phosphate + H(+). Functionally, has nucleoside phosphatase activity towards nucleoside triphosphates and nucleoside diphosphates. In Ligilactobacillus salivarius (strain UCC118) (Lactobacillus salivarius), this protein is Nucleoside triphosphate/diphosphate phosphatase.